A 227-amino-acid chain; its full sequence is Uridylate kinase (227 aa).

Residue 7–11 (KISGK) participates in ATP binding. Gly44 is a UMP binding site. Positions 45 and 49 each coordinate ATP. Residues Asp66 and 114-120 (FQPGQST) each bind UMP. ATP-binding residues include Thr140, Asn141, Tyr146, and Asp149.

The protein belongs to the UMP kinase family. In terms of assembly, homohexamer.

The protein resides in the cytoplasm. It carries out the reaction UMP + ATP = UDP + ADP. The protein operates within pyrimidine metabolism; CTP biosynthesis via de novo pathway; UDP from UMP (UMPK route): step 1/1. Its activity is regulated as follows. Unlike most bacteria, is not activated by GTP. UTP acts as a competitive inhibitor against both substrates. High concentration of UMP abolishes the inhibition of UTP at low ATP concentrations, indicating that UTP binds to the acceptor site (UMP site). Its function is as follows. Catalyzes the reversible phosphorylation of UMP to UDP, with ATP as the most efficient phosphate donor. Is also able to phosphorylate dUMP, although much less efficiently. This Saccharolobus solfataricus (strain ATCC 35092 / DSM 1617 / JCM 11322 / P2) (Sulfolobus solfataricus) protein is Uridylate kinase (pyrH).